Consider the following 234-residue polypeptide: MKIIKVKDQVEGGKEALKVFKEALDSGVKVFGLATGSTPETTYDELVKSDIDFSNSISVNLDEYVGLKPEDEQSYAYFMKEHLFNAKPFAKSFLPNGMAEDADQECERYDKLLEEYHVGLQLLGIGRNGHIGFNEPGSSFDGKTHKVALTQSTINANSRFFDNEEDVPKYAYSMGIGTIMKSDTILLEAFGKNKAEAVKAMIEGPVTPEVPASVLQNHPDVVVIIDEEAASLLK.

D62 acts as the Proton acceptor; for enolization step in catalysis. N128 acts as the For ring-opening step in catalysis. H130 serves as the catalytic Proton acceptor; for ring-opening step. The For ring-opening step role is filled by E135.

This sequence belongs to the glucosamine/galactosamine-6-phosphate isomerase family. NagB subfamily.

It catalyses the reaction alpha-D-glucosamine 6-phosphate + H2O = beta-D-fructose 6-phosphate + NH4(+). It functions in the pathway amino-sugar metabolism; N-acetylneuraminate degradation; D-fructose 6-phosphate from N-acetylneuraminate: step 5/5. In terms of biological role, catalyzes the reversible isomerization-deamination of glucosamine 6-phosphate (GlcN6P) to form fructose 6-phosphate (Fru6P) and ammonium ion. The protein is Glucosamine-6-phosphate deaminase of Ligilactobacillus salivarius (strain UCC118) (Lactobacillus salivarius).